The chain runs to 605 residues: Putative glutaminase 2 (605 aa).

Positions 213, 262, 308, 315, 342, 394, and 412 each coordinate substrate. 2 ANK repeats span residues 480 to 509 (DRLI…DLNT) and 513 to 543 (DDRT…DVDK). Over residues 569–581 (KAMKRPEQHRKDS) the composition is skewed to basic and acidic residues. Residues 569–605 (KAMKRPEQHRKDSVSSLDTDDEIDDDGFPEKPSFTID) form a disordered region. Residues 586–595 (DTDDEIDDDG) show a composition bias toward acidic residues.

Belongs to the glutaminase family.

It carries out the reaction L-glutamine + H2O = L-glutamate + NH4(+). The polypeptide is Putative glutaminase 2 (glna-2) (Caenorhabditis elegans).